The sequence spans 70 residues: Putative membrane protein insertion efficiency factor (70 aa).

The protein belongs to the UPF0161 family.

The protein localises to the cell membrane. Could be involved in insertion of integral membrane proteins into the membrane. This chain is Putative membrane protein insertion efficiency factor, found in Rubrobacter xylanophilus (strain DSM 9941 / JCM 11954 / NBRC 16129 / PRD-1).